We begin with the raw amino-acid sequence, 177 residues long: Large ribosomal subunit protein uL6 (177 aa).

It belongs to the universal ribosomal protein uL6 family. Part of the 50S ribosomal subunit.

Functionally, this protein binds to the 23S rRNA, and is important in its secondary structure. It is located near the subunit interface in the base of the L7/L12 stalk, and near the tRNA binding site of the peptidyltransferase center. The sequence is that of Large ribosomal subunit protein uL6 from Agrobacterium fabrum (strain C58 / ATCC 33970) (Agrobacterium tumefaciens (strain C58)).